The sequence spans 93 residues: Em protein H2 (93 aa).

Residues methionine 1–serine 93 are disordered. Basic and acidic residues-rich tracts occupy residues serine 9 to glutamate 19, leucine 31 to methionine 52, and glycine 73 to serine 93.

This sequence belongs to the small hydrophilic plant seed protein family.

In terms of biological role, it is thought to provide protection for the cytoplasm during the desiccation stage of embryo development. The chain is Em protein H2 (EMH2) from Triticum aestivum (Wheat).